Reading from the N-terminus, the 181-residue chain is Protein Syd (181 aa).

The protein belongs to the Syd family.

Its subcellular location is the cell inner membrane. Functionally, interacts with the SecY protein in vivo. May bind preferentially to an uncomplexed state of SecY, thus functioning either as a chelating agent for excess SecY in the cell or as a regulatory factor that negatively controls the translocase function. In Citrobacter koseri (strain ATCC BAA-895 / CDC 4225-83 / SGSC4696), this protein is Protein Syd.